The sequence spans 478 residues: Sugar transporter ERD6-like 15 (478 aa).

The next 12 membrane-spanning stretches (helical) occupy residues 31–51, 67–87, 106–126, 129–149, 161–181, 185–205, 267–287, 305–325, 333–353, 366–386, 406–426, and 432–452; these read FVLA…IIGY, IADY…GALI, ILFV…LLDL, LLQG…ITEI, FAQL…TIVA, LAIL…FIPE, AFSL…GLNG, FGFI…TVLV, LLLV…ISFF, VLAL…MGSI, MCNL…SYLL, and GTFL…AKLV.

Belongs to the major facilitator superfamily. Sugar transporter (TC 2.A.1.1) family.

It is found in the membrane. Its function is as follows. Sugar transporter. In Arabidopsis thaliana (Mouse-ear cress), this protein is Sugar transporter ERD6-like 15.